The chain runs to 158 residues: Transcriptional repressor NrdR (158 aa).

Residues C3–C34 fold into a zinc finger. Residues V49 to T139 enclose the ATP-cone domain.

Belongs to the NrdR family. The cofactor is Zn(2+).

Negatively regulates transcription of bacterial ribonucleotide reductase nrd genes and operons by binding to NrdR-boxes. The polypeptide is Transcriptional repressor NrdR (Clostridium novyi (strain NT)).